Here is a 97-residue protein sequence, read N- to C-terminus: Exodeoxyribonuclease 7 small subunit (97 aa).

Positions 1–22 are disordered; that stretch reads MAKTASPGATPPGNGTEPLPDN.

This sequence belongs to the XseB family. As to quaternary structure, heterooligomer composed of large and small subunits.

The protein resides in the cytoplasm. The catalysed reaction is Exonucleolytic cleavage in either 5'- to 3'- or 3'- to 5'-direction to yield nucleoside 5'-phosphates.. Its function is as follows. Bidirectionally degrades single-stranded DNA into large acid-insoluble oligonucleotides, which are then degraded further into small acid-soluble oligonucleotides. The sequence is that of Exodeoxyribonuclease 7 small subunit from Burkholderia cenocepacia (strain HI2424).